The chain runs to 721 residues: Polyribonucleotide nucleotidyltransferase (721 aa).

Residues aspartate 495 and aspartate 501 each contribute to the Mg(2+) site. A KH domain is found at 562 to 621 (PRLLSFRIDPELIGTVIGPGGRTIKGITERTNTKIDIEDGGIVTIASHDGAAAEEAQKII). One can recognise an S1 motif domain in the interval 631 to 699 (GEIFPGVVTR…SRGRINLTLR (69 aa)). The segment at 702–721 (GQNGGMSYPEPTPTPVAPLS) is disordered. Pro residues predominate over residues 711–721 (EPTPTPVAPLS).

This sequence belongs to the polyribonucleotide nucleotidyltransferase family. Requires Mg(2+) as cofactor.

It localises to the cytoplasm. The catalysed reaction is RNA(n+1) + phosphate = RNA(n) + a ribonucleoside 5'-diphosphate. Functionally, involved in mRNA degradation. Catalyzes the phosphorolysis of single-stranded polyribonucleotides processively in the 3'- to 5'-direction. The chain is Polyribonucleotide nucleotidyltransferase from Prochlorococcus marinus (strain MIT 9301).